The primary structure comprises 101 residues: NADH-quinone oxidoreductase subunit K (101 aa).

3 helical membrane-spanning segments follow: residues 4 to 24, 29 to 49, and 61 to 81; these read VYDY…GIML, IILL…NFIA, and VFVF…LAIV.

Belongs to the complex I subunit 4L family. NDH-1 is composed of 14 different subunits. Subunits NuoA, H, J, K, L, M, N constitute the membrane sector of the complex.

It localises to the cell inner membrane. The enzyme catalyses a quinone + NADH + 5 H(+)(in) = a quinol + NAD(+) + 4 H(+)(out). In terms of biological role, NDH-1 shuttles electrons from NADH, via FMN and iron-sulfur (Fe-S) centers, to quinones in the respiratory chain. The immediate electron acceptor for the enzyme in this species is believed to be ubiquinone. Couples the redox reaction to proton translocation (for every two electrons transferred, four hydrogen ions are translocated across the cytoplasmic membrane), and thus conserves the redox energy in a proton gradient. In Legionella pneumophila (strain Paris), this protein is NADH-quinone oxidoreductase subunit K.